The following is a 485-amino-acid chain: Pre-glycoprotein polyprotein GP complex (485 aa).

Gly2 is lipidated: N-myristoyl glycine; by host. Residues 2–17 (GQLISFFGEIPTILQE) lie on the Extracellular side of the membrane. The chain crosses the membrane as a helical span at residues 18–33 (ALNIALIAVSIIATIK). Topologically, residues 34–58 (GVVNVWKSGLIQLLMFVMLAGRSCS) are cytoplasmic. Position 57 (Cys57) interacts with Zn(2+). Over 59–424 (VQIGHHLELE…QGRTPLSLVD (366 aa)) the chain is Extracellular. Cystine bridges form between Cys85–Cys225, Cys271–Cys284, Cys293–Cys302, and Cys356–Cys377. N-linked (GlcNAc...) asparagine; by host glycans are attached at residues Asn88, Asn128, Asn179, and Asn218. N-linked (GlcNAc...) asparagine; by host glycosylation is found at Asn357, Asn365, Asn382, and Asn387. Residues 425–445 (VCFWSTLFYTASIFLHLIRIP) traverse the membrane as a helical segment. Residues 446–485 (THRHIVGEGCPKPHRLRADSTCACGLYKQKRRPLKWVRSN) are Cytoplasmic-facing. The Zn(2+) site is built by His447, His449, Cys455, His459, Cys467, and Cys469.

The protein belongs to the arenaviridae GPC protein family. In terms of assembly, interacts with glycoprotein G2. Part of the GP complex (GP-C) together with glycoprotein G1 and glycoprotein G2. The GP-complex interacts with protein Z, which interacts with ribonucleocapsid; these interactions may induce virion budding. As to quaternary structure, homotrimer; disulfide-linked. In pre-fusion state, G1 homotrimers bind G2 homotrimers via ionic interactions. Part of the GP complex (GP-C) together with glycoprotein G2 and the stable signal peptide. The GP-complex interacts with protein Z, which interacts with ribonucleocapsid; these interactions may induce virion budding. Homotrimer. Interacts with the stable signal peptide. In pre-fusion state, G2 homotrimers bind G1 homotrimers via ionic interactions. Part of the GP complex (GP-C) together with glycoprotein G1 and the stable signal peptide. Acidification in the endosome triggers rearrangements, which ultimately leads to a 6 helix bundle formed by the two heptad repeat domains (HR1 and HR2) in post-fusion state. The GP-complex interacts with protein Z, which interacts with ribonucleocapsid; these interactions may induce virion budding. Specific enzymatic cleavages in vivo yield mature proteins. GP-C polyprotein is cleaved in the endoplasmic reticulum by the host protease MBTPS1. Only cleaved glycoprotein is incorporated into virions. Post-translationally, the SSP remains stably associated with the GP complex following cleavage by signal peptidase and plays crucial roles in the trafficking of GP through the secretory pathway. In terms of processing, myristoylation is necessary for GP2-mediated fusion activity.

The protein resides in the virion membrane. It localises to the host endoplasmic reticulum membrane. It is found in the host Golgi apparatus membrane. The protein localises to the host cell membrane. Its function is as follows. Functions as a cleaved signal peptide that is retained as the third component of the GP complex (GP-C). Helps to stabilize the spike complex in its native conformation. The SSP is required for efficient glycoprotein expression, post-translational maturation cleavage of G1 and G2, glycoprotein transport to the cell surface plasma membrane, formation of infectious virus particles, and acid pH-dependent glycoprotein-mediated cell fusion. Forms the virion spikes together with glycoprotein G2. The glycoprotein spike trimers are connected to the underlying matrix. Interacts with the host receptor leading to virus endocytosis. In terms of biological role, forms the virion spikes together with glycoprotein G1. The glycoprotein spike trimers are connected to the underlying matrix. Class I viral fusion protein that directs fusion of viral and host endosomal membranes, leading to delivery of the nucleocapsid into the cytoplasm. Membrane fusion is mediated by irreversible conformational changes induced by acidification. The chain is Pre-glycoprotein polyprotein GP complex from Sigmodon hispidus (Hispid cotton rat).